Consider the following 458-residue polypeptide: GDP-fucose protein O-fucosyltransferase 3 (458 aa).

Residues 1–11 (MRRISVKKLCS) lie on the Cytoplasmic side of the membrane. The helical; Signal-anchor for type II membrane protein transmembrane segment at 12–32 (FCLCACAFAFLVMTFQVIELL) threads the bilayer. Residues 33 to 458 (GQFEQTEHRQ…TQFWREVFTD (426 aa)) lie on the Lumenal side of the membrane. 3 N-linked (GlcNAc...) asparagine glycosylation sites follow: N92, N150, and N300. C371 and C374 are disulfide-bonded. The N-linked (GlcNAc...) asparagine glycan is linked to N445.

It belongs to the glycosyltransferase 10 family.

Its subcellular location is the endoplasmic reticulum membrane. It carries out the reaction L-threonyl-[protein] + GDP-beta-L-fucose = 3-O-(alpha-L-fucosyl)-L-threonyl-[protein] + GDP + H(+). The catalysed reaction is L-seryl-[protein] + GDP-beta-L-fucose = 3-O-(alpha-L-fucosyl)-L-seryl-[protein] + GDP + H(+). Its pathway is protein modification; protein glycosylation. Protein O-fucosyltransferase that specifically catalyzes O-fucosylation of serine or threonine residues in EMI domains of target proteins. Attaches fucose through an O-glycosidic linkage. O-fucosylation of EMI domain-containing proteins may be required for facilitating protein folding and secretion. The polypeptide is GDP-fucose protein O-fucosyltransferase 3 (fut10) (Danio rerio (Zebrafish)).